The chain runs to 376 residues: N-acetyldiaminopimelate deacetylase (376 aa).

Residue D69 is part of the active site. E128 acts as the Proton acceptor in catalysis.

This sequence belongs to the peptidase M20A family. N-acetyldiaminopimelate deacetylase subfamily.

The catalysed reaction is N-acetyl-(2S,6S)-2,6-diaminopimelate + H2O = (2S,6S)-2,6-diaminopimelate + acetate. The protein operates within amino-acid biosynthesis; L-lysine biosynthesis via DAP pathway; LL-2,6-diaminopimelate from (S)-tetrahydrodipicolinate (acetylase route): step 3/3. Catalyzes the conversion of N-acetyl-diaminopimelate to diaminopimelate and acetate. The polypeptide is N-acetyldiaminopimelate deacetylase (Streptococcus pneumoniae serotype 19F (strain G54)).